We begin with the raw amino-acid sequence, 316 residues long: MSKLNIIFAGTPDFAAQHLQALLDSEHNVIAVYTQPDKPAGRGKKLQASPVKQLAEQHNIPVYQPKSLRKEDAQAELKALNADVMVVVAYGLILPEAVLNAPKYGCLNVHGSLLPRWRGAAPIQRSIWAGDQETGVTIMQMDIGLDTGDMLHKVTTPIAADETSASLYAKLAELAPPALLEVLNGLESQAFKAEKQDEALSNYAEKLSKEEAKLDWNLTACQLERNIRAFNPWPISFLTLEVDGVEQSVKVYQANVLPHQAKAAGTVLQADKNGIQIATQEGVLNITQLQPSGKKPMSVQDFLNGRADWFAVGKQL.

112–115 (SLLP) contributes to the (6S)-5,6,7,8-tetrahydrofolate binding site.

The protein belongs to the Fmt family.

The catalysed reaction is L-methionyl-tRNA(fMet) + (6R)-10-formyltetrahydrofolate = N-formyl-L-methionyl-tRNA(fMet) + (6S)-5,6,7,8-tetrahydrofolate + H(+). Attaches a formyl group to the free amino group of methionyl-tRNA(fMet). The formyl group appears to play a dual role in the initiator identity of N-formylmethionyl-tRNA by promoting its recognition by IF2 and preventing the misappropriation of this tRNA by the elongation apparatus. The polypeptide is Methionyl-tRNA formyltransferase (Actinobacillus pleuropneumoniae serotype 7 (strain AP76)).